The following is a 256-amino-acid chain: MAVISMKQLLEAGVHFGHQTRRWNPKMAKYIFTERNGIHVIDLQQTVKLADQAYEFVRDAAANDAVILFVGTKKQAAEAVADEATRAGQYFINHRWLGGTLTNWGTIQKRIARLKEIKRMEEEGTFEVLPKKEVALLNKQRARLEKFLGGIEDMPRIPDVMYVVDPHKEQIAVKEAKKLGIPVVAMVDTNADPDDIDVIIPANDDAIRAVKLITAKLADAVIEGRQGEDAEVAFEADTQAESIEEIVEVVEGSNEA.

Belongs to the universal ribosomal protein uS2 family.

The sequence is that of Small ribosomal subunit protein uS2 from Streptococcus equi subsp. equi (strain 4047).